Here is a 1209-residue protein sequence, read N- to C-terminus: Calcium-activated potassium channel subunit alpha-1 (1209 aa).

Residues 1–23 (MANGGGGGGGSSGGGGGGGGGSG) are compositionally biased toward gly residues. The disordered stretch occupies residues 1–61 (MANGGGGGGG…SSSSSSSSSV (61 aa)). At 1-86 (MANGGGGGGG…VPCDSRGQRM (86 aa)) the chain is on the extracellular side. Positions 25 to 39 (RMSSNIHANNLSLDA) are enriched in polar residues. Residues 40-60 (SSSSSSSSSSSSSSSSSSSSS) are compositionally biased toward low complexity. A helical transmembrane segment spans residues 87–107 (WWAFLASSMVTFFGGLFIILL). The Cytoplasmic segment spans residues 108–178 (WRTLKYLWTV…MISAQTLTGR (71 aa)). S-palmitoyl cysteine attachment occurs at residues Cys-118, Cys-119, and Cys-121. Residues 179–199 (VLVVLVFALSIGALVIYFIDS) form a helical membrane-spanning segment. Residues 200 to 214 (SNPIESCQNFYKDFT) lie on the Extracellular side of the membrane. Residues 215–235 (LQIDMAFNVFFLLYFGLRFIA) traverse the membrane as a helical segment. Over 236-239 (ANDK) the chain is Cytoplasmic. The chain crosses the membrane as a helical span at residues 240–260 (LWFWLEVNSVVDFFTVPPVFV). Residues 261 to 264 (SVYL) lie on the Extracellular side of the membrane. Residues 265 to 285 (NRSWLGLRFLRALRLIQFSEI) form a helical; Voltage-sensor membrane-spanning segment. The Cytoplasmic portion of the chain corresponds to 286-300 (LQFLNILKTSNSIKL). Residues 301-321 (VNLLSIFISTWLTAAGFIHLV) traverse the membrane as a helical segment. At 322-335 (ENSGDPWENFQNNQ) the chain is on the extracellular side. The segment at residues 336-358 (ALTYWECVYLLMVTMSTVGYGDV) is an intramembrane region (pore-forming). The Selectivity for potassium motif lies at 352-355 (TVGY). The Extracellular segment spans residues 359–367 (YAKTTLGRL). The helical transmembrane segment at 368-388 (FMVFFILGGLAMFASYVPEII) threads the bilayer. The Cytoplasmic segment spans residues 389–1209 (ELIGNRKKYG…KQNRKEMVYR (821 aa)). The region spanning 407–549 (RKHIVVCGHI…WNWKEGDDAI (143 aa)) is the RCK N-terminal 1 domain. Positions 439, 462, and 464 each coordinate Mg(2+). A segment S7 region spans residues 556–576 (LGFIAQSCLAQGLSTMLANLF). Residues 613-633 (LSFPTVCELCFVKLKLLMIAI) are segment S8. Position 670 is a phosphothreonine (Asp-670). Lys-672 is modified (phosphoserine). The heme-binding motif stretch occupies residues 681–685 (CKACH). The interval 703 to 733 (EDEQPPTLSPKKKQRNGGMRNSPNTSPKLMR) is disordered. Residue Thr-709 is modified to Phosphothreonine. Ser-711, Ser-724, and Ser-728 each carry phosphoserine. Residues 783-803 (VLSGHVVVCIFGDVSSALIGL) form a segment S9 region. One can recognise an RCK N-terminal 2 domain in the interval 785 to 929 (SGHVVVCIFG…MDRSSPDNSP (145 aa)). Position 916 is a phosphothreonine (Thr-916). Ser-924 and Ser-928 each carry phosphoserine. Positions 976-998 (TELVNDTNVQFLDQDDDDDPDTE) match the Calcium bowl motif. Ca(2+) contacts are provided by Gln-985, Asp-988, Asp-991, and Asp-993. The segment at 1005-1025 (FACGTAFAVSVLDSLMSATYF) is segment S10. Low complexity predominate over residues 1159-1184 (RASLSHSSHSSQSSSKKSSSVHSIPS). The interval 1159 to 1209 (RASLSHSSHSSQSSSKKSSSVHSIPSTANRPNRPKSRESRDKQNRKEMVYR) is disordered. Over residues 1193–1209 (KSRESRDKQNRKEMVYR) the composition is skewed to basic and acidic residues. Ser-1194 and Ser-1197 each carry phosphoserine.

It belongs to the potassium channel family. Calcium-activated (TC 1.A.1.3) subfamily. KCa1.1/KCNMA1 sub-subfamily. Homotetramer; which constitutes the calcium-activated potassium channel. Interacts with beta subunits KCNMB1, KCNMB2, KCNMB3 and KCNMB4. Interacts with gamma subunits LRRC26, LRRC38, LRRC52 and LRRC55. Beta and gamma subunits are accessory, and modulate its activity. Interacts with RAB11B. Post-translationally, phosphorylated. Phosphorylation by kinases such as PKA and/or PKG. In smooth muscles, phosphorylation affects its activity. Palmitoylation by ZDHHC22 and ZDHHC23 within the intracellular linker between the S0 and S1 transmembrane domains regulates localization to the plasma membrane. Depalmitoylated by LYPLA1 and LYPLAL1, leading to retard exit from the trans-Golgi network.

The protein resides in the cell membrane. The catalysed reaction is K(+)(in) = K(+)(out). Ethanol and carbon monoxide-bound heme increase channel activation. Heme inhibits channel activation. Functionally, potassium channel activated by both membrane depolarization or increase in cytosolic Ca(2+) that mediates export of K(+). It is also activated by the concentration of cytosolic Mg(2+). Its activation dampens the excitatory events that elevate the cytosolic Ca(2+) concentration and/or depolarize the cell membrane. It therefore contributes to repolarization of the membrane potential. Plays a key role in controlling excitability in a number of systems, such as regulation of the contraction of smooth muscle, the tuning of hair cells in the cochlea, regulation of transmitter release, and innate immunity. In smooth muscles, its activation by high level of Ca(2+), caused by ryanodine receptors in the sarcoplasmic reticulum, regulates the membrane potential. In cochlea cells, its number and kinetic properties partly determine the characteristic frequency of each hair cell and thereby helps to establish a tonotopic map. Kinetics of KCNMA1 channels are determined by alternative splicing, phosphorylation status and its combination with modulating beta subunits. Highly sensitive to both iberiotoxin (IbTx) and charybdotoxin (CTX). Potassium channel activated by both membrane depolarization or increase in cytosolic Ca(2+) that mediates export of K(+). The chain is Calcium-activated potassium channel subunit alpha-1 (Kcnma1) from Mus musculus (Mouse).